We begin with the raw amino-acid sequence, 298 residues long: ADP/ATP translocase 1 (298 aa).

The Mitochondrial intermembrane portion of the chain corresponds to 1–7 (MGDQALS). An N-acetylglycine modification is found at G2. One copy of the Solcar 1 repeat lies at 6–98 (LSFLKDFLAG…FAFKDKYKQI (93 aa)). S7 carries the phosphoserine modification. A helical membrane pass occupies residues 8 to 37 (FLKDFLAGGIAAAVSKTAVAPIERVKLLLQ). Over 38–74 (VQHASKQISAEKQYKGIIDCVVRIPKEQGFLSFWRGN) the chain is Mitochondrial matrix. At K52 the chain carries N6,N6,N6-trimethyllysine. Residues 75–99 (LANVIRYFPTQALNFAFKDKYKQIF) form a helical membrane-spanning segment. R80 and K92 together coordinate ADP. Residues 100–109 (LGGVDRHKQF) lie on the Mitochondrial intermembrane side of the membrane. A helical membrane pass occupies residues 110–130 (WRYFAGNLASGGAAGATSLCF). Solcar repeat units follow at residues 111–201 (RYFA…AKGM) and 212–297 (VSWM…IKKY). The Mitochondrial matrix portion of the chain corresponds to 131 to 178 (VYPLDFARTRLAADVGKGSSQREFNGLGDCLTKIFKSDGLKGLYQGFS). K147 is subject to N6-succinyllysine. Phosphoserine is present on residues S149 and S150. At C160 the chain carries S-nitrosocysteine. A helical membrane pass occupies residues 179–199 (VSVQGIIIYRAAYFGVYDTAK). Residues 200 to 210 (GMLPDPKNVHI) are Mitochondrial intermembrane-facing. The chain crosses the membrane as a helical span at residues 211–231 (IVSWMIAQSVTAVAGLVSYPF). The Mitochondrial matrix segment spans residues 232–273 (DTVRRRMMMQSGRKGADIMYTGTVDCWRKIAKDEGRKAFFKG). R235 contributes to the ADP binding site. An important for transport activity region spans residues 235–240 (RRRMMM). The Nucleotide carrier signature motif motif lies at 235–240 (RRRMMM). K245 and K272 each carry N6-succinyllysine. The chain crosses the membrane as a helical span at residues 274-291 (AWSNVLRGMGGAFVLVLY). Over 292 to 298 (DEIKKYV) the chain is Mitochondrial intermembrane.

The protein belongs to the mitochondrial carrier (TC 2.A.29) family. As to quaternary structure, monomer. Found in a complex with ARL2, ARL2BP and SLC25A4/ANT1. Interacts with ARL2BP. Interacts with TIMM44; leading to inhibit the presequence translocase TIMM23, thereby promoting stabilization of PINK1. In terms of processing, under cell death induction, transglutaminated by TGM2. Transglutamination leads to formation of covalent cross-links between a glutamine and the epsilon-amino group of a lysine residue, forming polymers.

The protein localises to the mitochondrion inner membrane. Its subcellular location is the membrane. The enzyme catalyses ADP(in) + ATP(out) = ADP(out) + ATP(in). It carries out the reaction H(+)(in) = H(+)(out). With respect to regulation, the matrix-open state (m-state) is inhibited by the membrane-permeable bongkrekic acid (BKA). The cytoplasmic-open state (c-state) is inhibited by the membrane-impermeable toxic inhibitor carboxyatractyloside (CATR). Proton transporter activity is inhibited by ADP:ATP antiporter activity. ADP:ATP antiporter that mediates import of ADP into the mitochondrial matrix for ATP synthesis, and export of ATP out to fuel the cell. Cycles between the cytoplasmic-open state (c-state) and the matrix-open state (m-state): operates by the alternating access mechanism with a single substrate-binding site intermittently exposed to either the cytosolic (c-state) or matrix (m-state) side of the inner mitochondrial membrane. In addition to its ADP:ATP antiporter activity, also involved in mitochondrial uncoupling and mitochondrial permeability transition pore (mPTP) activity. Plays a role in mitochondrial uncoupling by acting as a proton transporter: proton transport uncouples the proton flows via the electron transport chain and ATP synthase to reduce the efficiency of ATP production and cause mitochondrial thermogenesis. Proton transporter activity is inhibited by ADP:ATP antiporter activity, suggesting that SLC25A4/ANT1 acts as a master regulator of mitochondrial energy output by maintaining a delicate balance between ATP production (ADP:ATP antiporter activity) and thermogenesis (proton transporter activity). Proton transporter activity requires free fatty acids as cofactor, but does not transport it. Also plays a key role in mPTP opening, a non-specific pore that enables free passage of the mitochondrial membranes to solutes of up to 1.5 kDa, and which contributes to cell death. It is however unclear if SLC25A4/ANT1 constitutes a pore-forming component of mPTP or regulates it. Acts as a regulator of mitophagy independently of ADP:ATP antiporter activity: promotes mitophagy via interaction with TIMM44, leading to inhibit the presequence translocase TIMM23, thereby promoting stabilization of PINK1. The chain is ADP/ATP translocase 1 from Rattus norvegicus (Rat).